Reading from the N-terminus, the 346-residue chain is Phosphoribosylformylglycinamidine cyclo-ligase (346 aa).

This sequence belongs to the AIR synthase family.

It is found in the cytoplasm. It catalyses the reaction 2-formamido-N(1)-(5-O-phospho-beta-D-ribosyl)acetamidine + ATP = 5-amino-1-(5-phospho-beta-D-ribosyl)imidazole + ADP + phosphate + H(+). The protein operates within purine metabolism; IMP biosynthesis via de novo pathway; 5-amino-1-(5-phospho-D-ribosyl)imidazole from N(2)-formyl-N(1)-(5-phospho-D-ribosyl)glycinamide: step 2/2. The chain is Phosphoribosylformylglycinamidine cyclo-ligase from Vibrio campbellii (strain ATCC BAA-1116).